Reading from the N-terminus, the 337-residue chain is Inositol 2-dehydrogenase (337 aa).

It belongs to the Gfo/Idh/MocA family. Homotetramer.

The catalysed reaction is myo-inositol + NAD(+) = scyllo-inosose + NADH + H(+). Its function is as follows. Involved in the oxidation of myo-inositol (MI) to 2-keto-myo-inositol (2KMI or 2-inosose). The protein is Inositol 2-dehydrogenase of Gluconacetobacter diazotrophicus (strain ATCC 49037 / DSM 5601 / CCUG 37298 / CIP 103539 / LMG 7603 / PAl5).